Reading from the N-terminus, the 1570-residue chain is Mediator of RNA polymerase II transcription subunit 1 (1570 aa).

Short sequence motifs (LXXLL motif) lie at residues Leu-585–Leu-589 and Leu-626–Leu-630. Disordered regions lie at residues Thr-592–Asp-687, Ser-771–Phe-880, and Ser-922–Asp-1561. The segment covering Thr-675–Asp-687 has biased composition (basic and acidic residues). Composition is skewed to polar residues over residues Arg-788–Phe-801, Gly-832–Phe-861, and Gln-931–Leu-942. A compositionally biased stretch (basic and acidic residues) spans Leu-946–Glu-958. Residues Asn-961 to Ser-970 show a composition bias toward gly residues. Low complexity-rich tracts occupy residues Pro-1022 to Gly-1035, Ser-1066 to Ser-1082, Ser-1089 to Gly-1113, Ser-1121 to Lys-1140, and Ser-1152 to Ser-1161. Residues Met-1173 to Ser-1190 are compositionally biased toward polar residues. The span at Gly-1217 to Ser-1228 shows a compositional bias: gly residues. Residues Asn-1229–Ser-1271 are compositionally biased toward low complexity. Polar residues predominate over residues Val-1276–Lys-1287. Residues Val-1308–Thr-1328 are compositionally biased toward gly residues. Over residues Pro-1347–Lys-1359 the composition is skewed to basic and acidic residues. Composition is skewed to polar residues over residues Ser-1418–Thr-1433 and Pro-1441–Asp-1455. A compositionally biased stretch (low complexity) spans Glu-1459–Ser-1469. The segment covering Lys-1494–Lys-1503 has biased composition (basic residues). Basic and acidic residues predominate over residues Arg-1504 to Lys-1516. Residues Met-1536–Ser-1546 show a composition bias toward low complexity.

The protein belongs to the Mediator complex subunit 1 family. Component of the Mediator complex.

It localises to the nucleus. In terms of biological role, component of the Mediator complex, a coactivator involved in the regulated transcription of nearly all RNA polymerase II-dependent genes. Mediator functions as a bridge to convey information from gene-specific regulatory proteins to the basal RNA polymerase II transcription machinery. Mediator is recruited to promoters by direct interactions with regulatory proteins and serves as a scaffold for the assembly of a functional preinitiation complex with RNA polymerase II and the general transcription factors. This is Mediator of RNA polymerase II transcription subunit 1 (med1) from Xenopus laevis (African clawed frog).